The following is a 101-amino-acid chain: MEKHNEHKTLNHKSSKEKDQITNRLKRIEGQVRGIQNMVENDRYCVDILVQISAVQAAMKNVALHLLEDHAHHCVADAIKSGDGEQAISELLDVFKKFTKS.

Residues 1-22 (MEKHNEHKTLNHKSSKEKDQIT) are disordered. Residues Cys45, His70, and Cys74 each coordinate Cu cation.

This sequence belongs to the CsoR family. Homotetramer. Binds DNA with a stoichiometry of 2 tetramers per DNA.

The protein localises to the cytoplasm. Copper-sensitive repressor that has a key role in copper homeostasis. Negatively regulates expression of the copZA operon and of cutJ/ycnJ. In the absence of copper ions, binds with high affinity to the copZA promoter and represses the transcription. In the presence of copper ions, CsoR binds Cu(1+), which significantly decreases its DNA binding affinity and leads to the transcription of the genes. The sequence is that of Copper-sensing transcriptional repressor CsoR (csoR) from Bacillus subtilis (strain 168).